The chain runs to 456 residues: tRNA modification GTPase MnmE (456 aa).

(6S)-5-formyl-5,6,7,8-tetrahydrofolate contacts are provided by Arg-24, Glu-81, and Lys-120. Positions 216–379 (GMTVVIAGRP…LRDHLKACMG (164 aa)) constitute a TrmE-type G domain. Residue Asn-226 coordinates K(+). Residues 226-231 (NAGKSS), 245-251 (TDIAGTT), 270-273 (DTAG), and 335-338 (NKAD) contribute to the GTP site. Ser-230 provides a ligand contact to Mg(2+). K(+)-binding residues include Thr-245, Ile-247, and Thr-250. Residue Thr-251 coordinates Mg(2+). Lys-456 contacts (6S)-5-formyl-5,6,7,8-tetrahydrofolate.

This sequence belongs to the TRAFAC class TrmE-Era-EngA-EngB-Septin-like GTPase superfamily. TrmE GTPase family. As to quaternary structure, homodimer. Heterotetramer of two MnmE and two MnmG subunits. The cofactor is K(+).

It localises to the cytoplasm. Functionally, exhibits a very high intrinsic GTPase hydrolysis rate. Involved in the addition of a carboxymethylaminomethyl (cmnm) group at the wobble position (U34) of certain tRNAs, forming tRNA-cmnm(5)s(2)U34. The chain is tRNA modification GTPase MnmE from Pseudomonas putida (strain GB-1).